A 217-amino-acid chain; its full sequence is Uracil-DNA glycosylase (217 aa).

The active-site Proton acceptor is Asp62.

This sequence belongs to the uracil-DNA glycosylase (UDG) superfamily. UNG family.

It localises to the cytoplasm. It carries out the reaction Hydrolyzes single-stranded DNA or mismatched double-stranded DNA and polynucleotides, releasing free uracil.. Functionally, excises uracil residues from the DNA which can arise as a result of misincorporation of dUMP residues by DNA polymerase or due to deamination of cytosine. The protein is Uracil-DNA glycosylase of Streptococcus gordonii (strain Challis / ATCC 35105 / BCRC 15272 / CH1 / DL1 / V288).